A 697-amino-acid chain; its full sequence is Phenylalanine--tRNA ligase beta subunit, chloroplastic (697 aa).

Positions 283–368 constitute a B5 domain; it reads NISRILFIDK…RIYGFDNFIS (86 aa). Mg(2+) contacts are provided by Asp-346, Asp-352, Glu-355, and Glu-356. The FDX-ACB domain occupies 609 to 697; the sequence is SSYPSLTRDI…IDDLLNEYKL (89 aa).

The protein belongs to the phenylalanyl-tRNA synthetase beta subunit family. Type 1 subfamily. As to quaternary structure, tetramer of two alpha and two beta subunits. Mg(2+) is required as a cofactor.

It localises to the plastid. The protein localises to the chloroplast. It carries out the reaction tRNA(Phe) + L-phenylalanine + ATP = L-phenylalanyl-tRNA(Phe) + AMP + diphosphate + H(+). The protein is Phenylalanine--tRNA ligase beta subunit, chloroplastic of Gracilaria tenuistipitata var. liui (Red alga).